Consider the following 189-residue polypeptide: Ribosome maturation factor RimP (189 aa).

Belongs to the RimP family.

The protein localises to the cytoplasm. Its function is as follows. Required for maturation of 30S ribosomal subunits. This Mycobacteroides abscessus (strain ATCC 19977 / DSM 44196 / CCUG 20993 / CIP 104536 / JCM 13569 / NCTC 13031 / TMC 1543 / L948) (Mycobacterium abscessus) protein is Ribosome maturation factor RimP.